Consider the following 578-residue polypeptide: Probable multidrug ABC transporter ATP-binding protein YbhF (578 aa).

2 ABC transporter domains span residues 6–237 (ITLN…LMTS) and 330–559 (IEAK…PDPT). ATP-binding positions include 40 to 47 (GPDGAGKT) and 362 to 369 (GPNGAGKS).

It belongs to the ABC transporter superfamily. The complex is probably composed of two ATP-binding proteins (YbhF) and two transmembrane proteins (YbhR and YbhS).

In terms of biological role, part of the ABC transporter complex YbhFSR that could be involved in efflux of cefoperazone. Probably responsible for energy coupling to the transport system. The polypeptide is Probable multidrug ABC transporter ATP-binding protein YbhF (ybhF) (Escherichia coli (strain K12)).